Here is a 270-residue protein sequence, read N- to C-terminus: Formamidopyrimidine-DNA glycosylase (270 aa).

Residue proline 2 is the Schiff-base intermediate with DNA of the active site. Glutamate 3 functions as the Proton donor in the catalytic mechanism. The active-site Proton donor; for beta-elimination activity is lysine 58. 3 residues coordinate DNA: histidine 91, arginine 109, and arginine 151. The FPG-type zinc finger occupies 236–270 (MVYNRQEEPCRLCGTPIRQIRQGQRSTYYCPLCQP). Residue arginine 260 is the Proton donor; for delta-elimination activity of the active site.

Belongs to the FPG family. As to quaternary structure, monomer. The cofactor is Zn(2+).

The catalysed reaction is Hydrolysis of DNA containing ring-opened 7-methylguanine residues, releasing 2,6-diamino-4-hydroxy-5-(N-methyl)formamidopyrimidine.. It carries out the reaction 2'-deoxyribonucleotide-(2'-deoxyribose 5'-phosphate)-2'-deoxyribonucleotide-DNA = a 3'-end 2'-deoxyribonucleotide-(2,3-dehydro-2,3-deoxyribose 5'-phosphate)-DNA + a 5'-end 5'-phospho-2'-deoxyribonucleoside-DNA + H(+). Involved in base excision repair of DNA damaged by oxidation or by mutagenic agents. Acts as a DNA glycosylase that recognizes and removes damaged bases. Has a preference for oxidized purines, such as 7,8-dihydro-8-oxoguanine (8-oxoG). Has AP (apurinic/apyrimidinic) lyase activity and introduces nicks in the DNA strand. Cleaves the DNA backbone by beta-delta elimination to generate a single-strand break at the site of the removed base with both 3'- and 5'-phosphates. The protein is Formamidopyrimidine-DNA glycosylase of Chromobacterium violaceum (strain ATCC 12472 / DSM 30191 / JCM 1249 / CCUG 213 / NBRC 12614 / NCIMB 9131 / NCTC 9757 / MK).